Reading from the N-terminus, the 403-residue chain is uncharacterized protein (403 aa).

The first 26 residues, methionine 1–serine 26, serve as a signal peptide directing secretion. The Extracellular portion of the chain corresponds to phenylalanine 27–serine 381. Residues asparagine 58, asparagine 90, asparagine 93, asparagine 124, asparagine 137, asparagine 371, and asparagine 375 are each glycosylated (N-linked (GlcNAc...) asparagine). The chain crosses the membrane as a helical span at residues isoleucine 382–isoleucine 402. A topological domain (cytoplasmic) is located at residue isoleucine 403.

It localises to the membrane. This is an uncharacterized protein from Dictyostelium discoideum (Social amoeba).